We begin with the raw amino-acid sequence, 346 residues long: Alkylated DNA repair protein ALKBH8 homolog (346 aa).

Positions 1 to 21 (MVQPRFVRPTQSSPSSISGEP) are disordered. The segment covering 12-21 (SSPSSISGEP) has biased composition (low complexity). Positions 24-102 (SNLYVANCGP…RSLHIRYSVL (79 aa)) constitute an RRM domain. One can recognise a Fe2OG dioxygenase domain in the interval 208 to 328 (NLDQLTVNEY…RVSFTLRKVR (121 aa)). 3 residues coordinate Fe cation: H226, D228, and H298. 2-oxoglutarate contacts are provided by R319 and R325.

The protein belongs to the alkB family. The cofactor is Fe(2+).

Its function is as follows. Binds tRNA and catalyzes the iron and alpha-ketoglutarate dependent hydroxylation of 5-methylcarboxymethyl uridine at the wobble position of the anticodon loop in tRNA via its dioxygenase domain, giving rise to 5-(S)-methoxycarbonylhydroxymethyluridine. This chain is Alkylated DNA repair protein ALKBH8 homolog, found in Arabidopsis thaliana (Mouse-ear cress).